A 152-amino-acid chain; its full sequence is Ubiquitin-conjugating enzyme E2 B (152 aa).

One can recognise a UBC core domain in the interval 4 to 150 (PARRRLMRDF…VSAIVEQSWN (147 aa)). Cys-88 serves as the catalytic Glycyl thioester intermediate.

It belongs to the ubiquitin-conjugating enzyme family. In terms of assembly, interacts with RAD18, UBR2 and WAC.

Its subcellular location is the cell membrane. The protein localises to the nucleus. It carries out the reaction S-ubiquitinyl-[E1 ubiquitin-activating enzyme]-L-cysteine + [E2 ubiquitin-conjugating enzyme]-L-cysteine = [E1 ubiquitin-activating enzyme]-L-cysteine + S-ubiquitinyl-[E2 ubiquitin-conjugating enzyme]-L-cysteine.. Its pathway is protein modification; protein ubiquitination. Its function is as follows. E2 ubiquitin-conjugating enzyme that accepts ubiquitin from the ubiquitin-activating enzyme E1 and transfers it to a E3 ubiquitin-protein ligase. In vitro catalyzes 'Lys-11'-, as well as 'Lys-48'- and 'Lys-63'-linked polyubiquitination. Together with the E3 enzyme BRE1 (RNF20 and/or RNF40), plays a role in transcription regulation by catalyzing the monoubiquitination of histone H2B at 'Lys-120' to form H2BK120ub1. H2BK120ub1 gives a specific tag for epigenetic transcriptional activation, elongation by RNA polymerase II, telomeric silencing, and is also a prerequisite for H3K4me and H3K79me formation. May play a role in DNA repair. Associates to the E3 ligase RAD18 to form the UBE2B-RAD18 ubiquitin ligase complex involved in mono-ubiquitination of DNA-associated PCNA on 'Lys-164'. In association with the E3 enzyme UBR4, is involved in N-end rule-dependent protein degradation. May be involved in neurite outgrowth. The chain is Ubiquitin-conjugating enzyme E2 B (UBE2B) from Bos taurus (Bovine).